Consider the following 77-residue polypeptide: MKEQKWIHEGLITESLPNGMFRVRLDNEDFILGYISGRIRRSFIRILPGDRVKIEISRYDSTRGRIIYRLRNKDSNY.

The 71-residue stretch at 1–71 folds into the S1-like domain; the sequence is MKEQKWIHEG…TRGRIIYRLR (71 aa).

Belongs to the IF-1 family. Component of the 30S ribosomal translation pre-initiation complex which assembles on the 30S ribosome in the order IF-2 and IF-3, IF-1 and N-formylmethionyl-tRNA(fMet); mRNA recruitment can occur at any time during PIC assembly.

It localises to the plastid. Its subcellular location is the chloroplast. Functionally, one of the essential components for the initiation of protein synthesis. Stabilizes the binding of IF-2 and IF-3 on the 30S subunit to which N-formylmethionyl-tRNA(fMet) subsequently binds. Helps modulate mRNA selection, yielding the 30S pre-initiation complex (PIC). Upon addition of the 50S ribosomal subunit IF-1, IF-2 and IF-3 are released leaving the mature 70S translation initiation complex. The chain is Translation initiation factor IF-1, chloroplastic from Brexia madagascariensis.